The sequence spans 414 residues: MIOREX complex component 10 (414 aa).

The N-terminal 29 residues, 1–29 (MLSFRSLTSTFGFVSRFQIRRLGTSLSIQ), are a transit peptide targeting the mitochondrion. Over 30–373 (NLEVQDGRWK…ISLLNERNST (344 aa)) the chain is Mitochondrial matrix. A helical membrane pass occupies residues 374–394 (FLEWIIIYLIAFELCFEIYHF). The Mitochondrial intermembrane segment spans residues 395–414 (YQKYSSYCSEPTNDDLDATK).

It belongs to the RMD1/sif2 family. As to quaternary structure, associates with the mitochondrial ribosome.

The protein localises to the mitochondrion inner membrane. Functionally, component of MIOREX complexes, large expressome-like assemblies of ribosomes with factors involved in all the steps of post-transcriptional gene expression. In Saccharomyces cerevisiae (strain ATCC 204508 / S288c) (Baker's yeast), this protein is MIOREX complex component 10.